A 363-amino-acid polypeptide reads, in one-letter code: Aminomethyltransferase (363 aa).

Belongs to the GcvT family. As to quaternary structure, the glycine cleavage system is composed of four proteins: P, T, L and H.

The catalysed reaction is N(6)-[(R)-S(8)-aminomethyldihydrolipoyl]-L-lysyl-[protein] + (6S)-5,6,7,8-tetrahydrofolate = N(6)-[(R)-dihydrolipoyl]-L-lysyl-[protein] + (6R)-5,10-methylene-5,6,7,8-tetrahydrofolate + NH4(+). Its function is as follows. The glycine cleavage system catalyzes the degradation of glycine. The chain is Aminomethyltransferase from Dechloromonas aromatica (strain RCB).